Consider the following 239-residue polypeptide: Norbelladine 4'-O-methyltransferase (239 aa).

Residues V55, E77, 79 to 80 (GV), S85, D103, and A132 each bind S-adenosyl-L-methionine. D155 is an a divalent metal cation binding site. Residue D157 participates in S-adenosyl-L-methionine binding. A divalent metal cation contacts are provided by D181 and N182.

It belongs to the class I-like SAM-binding methyltransferase superfamily. Cation-dependent O-methyltransferase family. It depends on Mg(2+) as a cofactor. As to expression, mostly expressed in bulbs, and, to a lower extent, in stems and roots.

It carries out the reaction norbelladine + S-adenosyl-L-methionine = 4'-O-methylnorbelladine + S-adenosyl-L-homocysteine + H(+). It participates in alkaloid biosynthesis. In terms of biological role, 4'-O-methyltransferase converting norbelladine to 4'-O-methylnorbelladine. 4'-O-methylnorbelladine is a precursor to all Amaryllidaceae alkaloids such as galanthamine, lycorine and haemanthamine, and including haemanthamine- and crinamine-type alkaloids, promising anticancer agents. The protein is Norbelladine 4'-O-methyltransferase of Narcissus pseudonarcissus (Daffodil).